Here is a 306-residue protein sequence, read N- to C-terminus: Tyrosine recombinase XerC (306 aa).

The Core-binding (CB) domain maps to 6 to 92 (NTLYLQTKPY…ALRQWFSYLI (87 aa)). The Tyr recombinase domain occupies 113-292 (RLPKNIDAEQ…DFQHLAKIYD (180 aa)). Active-site residues include R152, K176, H244, R247, and H270. Y279 functions as the O-(3'-phospho-DNA)-tyrosine intermediate in the catalytic mechanism.

The protein belongs to the 'phage' integrase family. XerC subfamily. Forms a cyclic heterotetrameric complex composed of two molecules of XerC and two molecules of XerD.

The protein localises to the cytoplasm. Functionally, site-specific tyrosine recombinase, which acts by catalyzing the cutting and rejoining of the recombining DNA molecules. The XerC-XerD complex is essential to convert dimers of the bacterial chromosome into monomers to permit their segregation at cell division. It also contributes to the segregational stability of plasmids. This Actinobacillus pleuropneumoniae serotype 7 (strain AP76) protein is Tyrosine recombinase XerC.